The following is a 284-amino-acid chain: Nucleotide-binding protein VF_0384 (284 aa).

Position 8–15 (8–15 (GSSGAGKS)) interacts with ATP. Residue 56–59 (DIRN) participates in GTP binding.

This sequence belongs to the RapZ-like family.

Its function is as follows. Displays ATPase and GTPase activities. This is Nucleotide-binding protein VF_0384 from Aliivibrio fischeri (strain ATCC 700601 / ES114) (Vibrio fischeri).